The primary structure comprises 681 residues: Sodium-dependent phosphate transporter 1 (681 aa).

The next 6 membrane-spanning stretches (helical) occupy residues 25–45 (NLWM…SVGA), 66–86 (ACIL…AKVS), 106–126 (LMAG…VASF), 162–182 (IVMS…ILFF), 201–221 (ALPI…MYTG), and 234–254 (GTIL…WFFV). Residues 266–295 (VKSSPSESPLMEKKSNLKEDHEETKMAPGD) form a disordered region. 2 positions are modified to phosphoserine: Ser-269 and Ser-273. Residues 275-295 (LMEKKSNLKEDHEETKMAPGD) show a composition bias toward basic and acidic residues. A helical transmembrane segment spans residues 514–534 (VSLLFQFLQILTACFGSFAHG). The interval 553–560 (KQEASTKA) is a. Helical transmembrane passes span 561–581 (ATPI…LWVW), 602–622 (FSIE…GLPI), and 652–672 (IFMA…AIMA).

It belongs to the inorganic phosphate transporter (PiT) (TC 2.A.20) family. In terms of tissue distribution, ubiquitously expressed.

The protein resides in the cell membrane. It carries out the reaction 2 Na(+)(out) + phosphate(out) = 2 Na(+)(in) + phosphate(in). In terms of biological role, sodium-phosphate symporter which preferentially transports the monovalent form of phosphate with a stoichiometry of two sodium ions per phosphate ion. May play a role in extracellular matrix and cartilage calcification as well as in vascular calcification. Essential for cell proliferation but this function is independent of its phosphate transporter activity. Its function is as follows. (Microbial infection) May function as a retroviral receptor but do not confer infection susceptibility to Gibbon Ape Leukemia Virus (GaLV), Simian sarcoma-associated virus (SSAV) and Feline leukemia virus subgroup B (FeLV-B). The protein is Sodium-dependent phosphate transporter 1 (Slc20a1) of Mus musculus (Mouse).